A 671-amino-acid polypeptide reads, in one-letter code: Protein KHNYN (671 aa).

4 disordered regions span residues 234–274, 294–327, 344–402, and 577–626; these read RVAG…LSGE, EVAP…AHVP, HNGS…GGNL, and GPTL…RKTR. The segment covering 250-272 has biased composition (basic and acidic residues); sequence TVEKEERKQDAVRDMGSGRKELS. Positions 351-365 are enriched in pro residues; sequence PRVPSPPPAPEPPWP. The residue at position 355 (serine 355) is a Phosphoserine. The segment covering 367–381 has biased composition (basic and acidic residues); that stretch reads GDRDRDRDRGDRGDK. The RNase NYN domain maps to 430 to 582; sequence LRHIVIDGSN…LGRNGPTLDE (153 aa). A compositionally biased stretch (polar residues) spans 591–612; it reads QGSSKTQQPSKGSTEQANQQQG.

This sequence belongs to the N4BP1 family.

This Mus musculus (Mouse) protein is Protein KHNYN (Khnyn).